Consider the following 375-residue polypeptide: Trichodiene synthase (375 aa).

This sequence belongs to the trichodiene synthase family.

It carries out the reaction (2E,6E)-farnesyl diphosphate = trichodiene + diphosphate. It participates in sesquiterpene biosynthesis; trichothecene biosynthesis. Its function is as follows. TS is a member of the terpene cyclase group of enzymes. It catalyzes the isomerization and cyclization of farnesyl pyro-phosphate to form trichodiene, the first cyclic intermediate in the biosynthetic pathway for trichothecenes. It serves to branch trichothecene biosynthesis from the isoprenoid pathway. The protein is Trichodiene synthase (TRI5) of Gibberella zeae (strain ATCC MYA-4620 / CBS 123657 / FGSC 9075 / NRRL 31084 / PH-1) (Wheat head blight fungus).